Here is a 317-residue protein sequence, read N- to C-terminus: Apolipoprotein E (317 aa).

A signal peptide spans 1 to 18 (MKVLWAALLVTFLAGCQA). Repeat copies occupy residues 80-101 (TLMDETMKELKAYKSELEEQLS), 102-123 (PVAEETRARLSKELQAAQARLG), 124-145 (ADMEDVRSRLVQYRGEVQAMLG), 146-167 (QSTEELRARLASHLRKLRKRLL), 168-189 (RDADDLQKRLAVYQAGAREGAE), 190-211 (RGVSAIRERLGPLVEQGRVRAA), 212-233 (TVGSLAGQPLQERAQAWGERLR), and 234-255 (ARMEEVGSRTRDRLDEVKEQVA). The interval 80–255 (TLMDETMKEL…RLDEVKEQVA (176 aa)) is 8 X 22 AA approximate tandem repeats. Met143 carries the methionine sulfoxide modification. Ser147 carries the post-translational modification Phosphoserine. Residues 158–168 (HLRKLRKRLLR) form an LDL and other lipoprotein receptors binding region. 162–165 (LRKR) is a heparin binding site. The lipid-binding and lipoprotein association stretch occupies residues 210 to 290 (AATVGSLAGQ…SWFEPLVEDM (81 aa)). A glycan (O-linked (GalNAc...) threonine) is linked at Thr212. Position 229–236 (229–236 (GERLRARM)) interacts with heparin. Positions 266-317 (QQISLQAEAFQARLKSWFEPLVEDMQRQWAGLVEKVQAAVGASTAPVPSDNH) are homooligomerization. The interval 278-290 (RLKSWFEPLVEDM) is specificity for association with VLDL.

The protein belongs to the apolipoprotein A1/A4/E family. In terms of assembly, homotetramer. May interact with ABCA1; functionally associated with ABCA1 in the biogenesis of HDLs. May interact with APP/A4 amyloid-beta peptide; the interaction is extremely stable in vitro but its physiological significance is unclear. May interact with MAPT. May interact with MAP2. In the cerebrospinal fluid, interacts with secreted SORL1. Interacts with PMEL; this allows the loading of PMEL luminal fragment on ILVs to induce fibril nucleation. In terms of processing, APOE exists as multiple glycosylated and sialylated glycoforms within cells and in plasma. The extent of glycosylation and sialylation are tissue and context specific. Post-translationally, glycated in plasma VLDL. Phosphorylated by FAM20C in the extracellular medium.

It localises to the secreted. It is found in the extracellular space. The protein resides in the extracellular matrix. Its subcellular location is the extracellular vesicle. The protein localises to the endosome. It localises to the multivesicular body. In terms of biological role, APOE is an apolipoprotein, a protein associating with lipid particles, that mainly functions in lipoprotein-mediated lipid transport between organs via the plasma and interstitial fluids. APOE is a core component of plasma lipoproteins and is involved in their production, conversion and clearance. Apolipoproteins are amphipathic molecules that interact both with lipids of the lipoprotein particle core and the aqueous environment of the plasma. As such, APOE associates with chylomicrons, chylomicron remnants, very low density lipoproteins (VLDL) and intermediate density lipoproteins (IDL) but shows a preferential binding to high-density lipoproteins (HDL). It also binds a wide range of cellular receptors including the LDL receptor/LDLR, the LDL receptor-related proteins LRP1, LRP2 and LRP8 and the very low-density lipoprotein receptor/VLDLR that mediate the cellular uptake of the APOE-containing lipoprotein particles. Finally, APOE also has a heparin-binding activity and binds heparan-sulfate proteoglycans on the surface of cells, a property that supports the capture and the receptor-mediated uptake of APOE-containing lipoproteins by cells. A main function of APOE is to mediate lipoprotein clearance through the uptake of chylomicrons, VLDLs, and HDLs by hepatocytes. APOE is also involved in the biosynthesis by the liver of VLDLs as well as their uptake by peripheral tissues ensuring the delivery of triglycerides and energy storage in muscle, heart and adipose tissues. By participating in the lipoprotein-mediated distribution of lipids among tissues, APOE plays a critical role in plasma and tissues lipid homeostasis. APOE is also involved in two steps of reverse cholesterol transport, the HDLs-mediated transport of cholesterol from peripheral tissues to the liver, and thereby plays an important role in cholesterol homeostasis. First, it is functionally associated with ABCA1 in the biogenesis of HDLs in tissues. Second, it is enriched in circulating HDLs and mediates their uptake by hepatocytes. APOE also plays an important role in lipid transport in the central nervous system, regulating neuron survival and sprouting. This chain is Apolipoprotein E (APOE), found in Rhinopithecus roxellana (Golden snub-nosed monkey).